The sequence spans 364 residues: Chorismate synthase (364 aa).

An NADP(+)-binding site is contributed by arginine 47. Residues 125–127, glycine 285, 300–304, and arginine 327 each bind FMN; these read RFS and KPTPS.

This sequence belongs to the chorismate synthase family. In terms of assembly, homotetramer. FMNH2 is required as a cofactor.

It catalyses the reaction 5-O-(1-carboxyvinyl)-3-phosphoshikimate = chorismate + phosphate. The protein operates within metabolic intermediate biosynthesis; chorismate biosynthesis; chorismate from D-erythrose 4-phosphate and phosphoenolpyruvate: step 7/7. Catalyzes the anti-1,4-elimination of the C-3 phosphate and the C-6 proR hydrogen from 5-enolpyruvylshikimate-3-phosphate (EPSP) to yield chorismate, which is the branch point compound that serves as the starting substrate for the three terminal pathways of aromatic amino acid biosynthesis. This reaction introduces a second double bond into the aromatic ring system. This chain is Chorismate synthase, found in Dehalococcoides mccartyi (strain ATCC BAA-2266 / KCTC 15142 / 195) (Dehalococcoides ethenogenes (strain 195)).